Reading from the N-terminus, the 239-residue chain is Large ribosomal subunit protein uL1 (239 aa).

It belongs to the universal ribosomal protein uL1 family. As to quaternary structure, part of the 50S ribosomal subunit.

In terms of biological role, binds directly to 23S rRNA. The L1 stalk is quite mobile in the ribosome, and is involved in E site tRNA release. Protein L1 is also a translational repressor protein, it controls the translation of the L11 operon by binding to its mRNA. The chain is Large ribosomal subunit protein uL1 from Rickettsia africae (strain ESF-5).